A 567-amino-acid chain; its full sequence is DNA ligase B (567 aa).

Catalysis depends on K126, which acts as the N6-AMP-lysine intermediate.

The protein belongs to the NAD-dependent DNA ligase family. LigB subfamily.

It catalyses the reaction NAD(+) + (deoxyribonucleotide)n-3'-hydroxyl + 5'-phospho-(deoxyribonucleotide)m = (deoxyribonucleotide)n+m + AMP + beta-nicotinamide D-nucleotide.. In terms of biological role, catalyzes the formation of phosphodiester linkages between 5'-phosphoryl and 3'-hydroxyl groups in double-stranded DNA using NAD as a coenzyme and as the energy source for the reaction. The polypeptide is DNA ligase B (Pseudomonas putida (strain W619)).